We begin with the raw amino-acid sequence, 457 residues long: Karyogamy meiotic segregation protein 2 (457 aa).

Phosphoserine is present on Ser-134.

Interacts with sad1.

Its subcellular location is the cytoplasm. The protein resides in the cytoskeleton. The protein localises to the microtubule organizing center. It localises to the spindle pole body. This Schizosaccharomyces pombe (strain 972 / ATCC 24843) (Fission yeast) protein is Karyogamy meiotic segregation protein 2 (kms2).